Here is a 79-residue protein sequence, read N- to C-terminus: MEKMVKFELKYDELLEKIPYKYAIPVVVAKRAEAIREYARPFVITEDENPVSIAFMELSMNYIRIKNEDILKALIPKVK.

Belongs to the RNA polymerase subunit omega family. The RNAP catalytic core consists of 2 alpha, 1 beta, 1 beta' and 1 omega subunit. When a sigma factor is associated with the core the holoenzyme is formed, which can initiate transcription.

The enzyme catalyses RNA(n) + a ribonucleoside 5'-triphosphate = RNA(n+1) + diphosphate. In terms of biological role, promotes RNA polymerase assembly. Latches the N- and C-terminal regions of the beta' subunit thereby facilitating its interaction with the beta and alpha subunits. The sequence is that of DNA-directed RNA polymerase subunit omega from Thermotoga neapolitana (strain ATCC 49049 / DSM 4359 / NBRC 107923 / NS-E).